Here is a 188-residue protein sequence, read N- to C-terminus: Translation initiation factor IF-3 (188 aa).

It belongs to the IF-3 family. In terms of assembly, monomer.

Its subcellular location is the cytoplasm. In terms of biological role, IF-3 binds to the 30S ribosomal subunit and shifts the equilibrium between 70S ribosomes and their 50S and 30S subunits in favor of the free subunits, thus enhancing the availability of 30S subunits on which protein synthesis initiation begins. The protein is Translation initiation factor IF-3 of Fusobacterium nucleatum subsp. nucleatum (strain ATCC 25586 / DSM 15643 / BCRC 10681 / CIP 101130 / JCM 8532 / KCTC 2640 / LMG 13131 / VPI 4355).